A 226-amino-acid polypeptide reads, in one-letter code: Probable C4-dicarboxylate response regulator DctR (226 aa).

The 117-residue stretch at 7 to 123 folds into the Response regulatory domain; it reads KVLLIEDDPM…RMRQALEKYK (117 aa). Position 58 is a 4-aspartylphosphate (Asp-58). A DNA-binding region (H-T-H motif) is located at residues 179–198; that stretch reads AEEVAKALGIARVTARRYLD.

Post-translationally, phosphorylated by DctS.

The protein localises to the cytoplasm. Its function is as follows. Member of the two-component regulatory system DctS/DctR. Essential for expression of dctP. The chain is Probable C4-dicarboxylate response regulator DctR (dctR) from Bacillus subtilis (strain 168).